A 501-amino-acid polypeptide reads, in one-letter code: Glycerol kinase (501 aa).

Threonine 16 serves as a coordination point for ADP. Threonine 16, threonine 17, and serine 18 together coordinate ATP. Threonine 16 serves as a coordination point for sn-glycerol 3-phosphate. Arginine 20 serves as a coordination point for ADP. Sn-glycerol 3-phosphate is bound by residues arginine 84, glutamate 85, tyrosine 135, and aspartate 242. The glycerol site is built by arginine 84, glutamate 85, tyrosine 135, aspartate 242, and glutamine 243. Residues threonine 264 and glycine 307 each contribute to the ADP site. ATP-binding residues include threonine 264, glycine 307, glutamine 311, and glycine 408. Residue glycine 408 coordinates ADP.

It belongs to the FGGY kinase family.

It catalyses the reaction glycerol + ATP = sn-glycerol 3-phosphate + ADP + H(+). It functions in the pathway polyol metabolism; glycerol degradation via glycerol kinase pathway; sn-glycerol 3-phosphate from glycerol: step 1/1. In terms of biological role, key enzyme in the regulation of glycerol uptake and metabolism. Catalyzes the phosphorylation of glycerol to yield sn-glycerol 3-phosphate. This Saccharolobus islandicus (strain L.S.2.15 / Lassen #1) (Sulfolobus islandicus) protein is Glycerol kinase.